A 331-amino-acid chain; its full sequence is Lipoyl synthase (331 aa).

Residues 1-20 (MTTETNPAVTPAYNPSEKQK) are disordered. Residues Cys71, Cys76, Cys82, Cys97, Cys101, Cys104, and Ser311 each contribute to the [4Fe-4S] cluster site. The Radical SAM core domain maps to 82-300 (CFGKGTATFM…EEEAYKMGFA (219 aa)).

It belongs to the radical SAM superfamily. Lipoyl synthase family. It depends on [4Fe-4S] cluster as a cofactor.

It localises to the cytoplasm. It carries out the reaction [[Fe-S] cluster scaffold protein carrying a second [4Fe-4S](2+) cluster] + N(6)-octanoyl-L-lysyl-[protein] + 2 oxidized [2Fe-2S]-[ferredoxin] + 2 S-adenosyl-L-methionine + 4 H(+) = [[Fe-S] cluster scaffold protein] + N(6)-[(R)-dihydrolipoyl]-L-lysyl-[protein] + 4 Fe(3+) + 2 hydrogen sulfide + 2 5'-deoxyadenosine + 2 L-methionine + 2 reduced [2Fe-2S]-[ferredoxin]. It participates in protein modification; protein lipoylation via endogenous pathway; protein N(6)-(lipoyl)lysine from octanoyl-[acyl-carrier-protein]: step 2/2. Functionally, catalyzes the radical-mediated insertion of two sulfur atoms into the C-6 and C-8 positions of the octanoyl moiety bound to the lipoyl domains of lipoate-dependent enzymes, thereby converting the octanoylated domains into lipoylated derivatives. The protein is Lipoyl synthase of Janthinobacterium sp. (strain Marseille) (Minibacterium massiliensis).